We begin with the raw amino-acid sequence, 78 residues long: Defensin-like protein 149 (78 aa).

Residues 1–25 (MMKKLIQLSFTVMIIFTILVLGVVA) form the signal peptide. 4 disulfide bridges follow: cysteine 36–cysteine 77, cysteine 45–cysteine 65, cysteine 50–cysteine 71, and cysteine 54–cysteine 73.

This sequence belongs to the DEFL family.

It localises to the secreted. In Arabidopsis thaliana (Mouse-ear cress), this protein is Defensin-like protein 149 (LCR5).